Consider the following 242-residue polypeptide: Small ribosomal subunit protein uS2 (242 aa).

This sequence belongs to the universal ribosomal protein uS2 family.

The polypeptide is Small ribosomal subunit protein uS2 (Neisseria gonorrhoeae (strain ATCC 700825 / FA 1090)).